The following is a 75-amino-acid chain: Small ribosomal subunit protein eS17 (75 aa).

The protein belongs to the eukaryotic ribosomal protein eS17 family.

The protein is Small ribosomal subunit protein eS17 of Thermoplasma acidophilum (strain ATCC 25905 / DSM 1728 / JCM 9062 / NBRC 15155 / AMRC-C165).